A 408-amino-acid polypeptide reads, in one-letter code: uncharacterized protein (408 aa).

A divalent metal cation is bound by residues Glu-35, Asp-61, and Asn-96.

This sequence belongs to the metallophosphoesterase superfamily. A divalent metal cation serves as cofactor.

This is an uncharacterized protein from Bacillus subtilis (strain 168).